The sequence spans 684 residues: Ski-like protein (684 aa).

Residues Lys50 and Lys70 each participate in a glycyl lysine isopeptide (Lys-Gly) (interchain with G-Cter in SUMO2) cross-link. Residues 420–454 (SQSKELTKTEASKSISRQSEKAHSSGKLQKTVSYP) are disordered. Ser452 bears the Phosphoserine mark. Residues Lys489 and Lys527 each participate in a glycyl lysine isopeptide (Lys-Gly) (interchain with G-Cter in SUMO2) cross-link. Residues 536–684 (RTYLKQQEKL…ILKSSKTAKE (149 aa)) adopt a coiled-coil conformation.

The protein belongs to the SKI family. In terms of assembly, interacts with CPNE4 (via VWFA domain). Interacts with SMAD2, SMAD3 and RNF111. Isoform 1 interacts with WWP1. Post-translationally, ubiquitinated by RNF111 and ARK2C, promoting proteasomal degradation, leading to enhance the BMP-Smad signaling. Isoform SNON and isoform SNOA are widely expressed. Highest expression is found in skeletal muscle, followed by placenta and lung. Lowest expression in heart, brain and pancreas. Isoform SNOI expression is restricted to skeletal muscle.

Functionally, may have regulatory role in cell division or differentiation in response to extracellular signals. The chain is Ski-like protein (SKIL) from Homo sapiens (Human).